The primary structure comprises 113 residues: Hemerythrin (113 aa).

Fe cation contacts are provided by histidine 25, histidine 54, glutamate 58, histidine 73, histidine 77, histidine 101, and aspartate 106.

The protein belongs to the hemerythrin family. As to quaternary structure, homooctamer.

Functionally, hemerythrin is a respiratory protein in blood cells of certain marine worms. The oxygen-binding site in each chain contains two iron atoms. The polypeptide is Hemerythrin (Themiste dyscrita (Peanut worm)).